Reading from the N-terminus, the 835-residue chain is uncharacterized protein (835 aa).

This is an uncharacterized protein from Mycoplasma genitalium (strain ATCC 33530 / DSM 19775 / NCTC 10195 / G37) (Mycoplasmoides genitalium).